The sequence spans 178 residues: Deoxycytidylate deaminase (178 aa).

Positions 14-146 (EWPEYFMAVA…EATAARLLFD (133 aa)) constitute a CMP/dCMP-type deaminase domain. Zn(2+) is bound at residue H84. E86 functions as the Proton donor in the catalytic mechanism. Positions 110 and 113 each coordinate Zn(2+). Position 174 is a phosphoserine (S174).

This sequence belongs to the cytidine and deoxycytidylate deaminase family. In terms of assembly, homohexamer. Zn(2+) is required as a cofactor.

The enzyme catalyses dCMP + H2O + H(+) = dUMP + NH4(+). The catalysed reaction is 5-hydroxymethyl-dCMP + H2O + H(+) = 5-hydroxymethyl-dUMP + NH4(+). With respect to regulation, allosteric enzyme whose activity is greatly influenced by the end products of its metabolic pathway, dCTP and dTTP. Functionally, catalyzes the deamination of dCMP to dUMP, providing the nucleoside monophosphate substrate for the thymidylate synthase/TYMS. Also, part of a nucleotide salvage pathway that eliminates epigenetically modified 5-hydroxymethyl-dCMP (hmdCMP) in a two-step process entailing deamination to cytotoxic 5-hydroxymethyl-dUMP (hmdUMP), followed by its hydrolysis into 5-hydroxymethyluracil (hmU) and 2-deoxy-D-ribose 5-phosphate (deoxyribosephosphate). Catalyzes the first step in that pathway, the deamination of 5-hydroxymethyl-dCMP (hmdCMP). The chain is Deoxycytidylate deaminase from Pongo abelii (Sumatran orangutan).